We begin with the raw amino-acid sequence, 370 residues long: tRNA 2-selenouridine synthase (370 aa).

One can recognise a Rhodanese domain in the interval 12-136; the sequence is FLDDVPMMDM…MRTFLLETTQ (125 aa). The active-site S-selanylcysteine intermediate is the Cys-95.

This sequence belongs to the SelU family. As to quaternary structure, monomer.

The catalysed reaction is 5-methylaminomethyl-2-thiouridine(34) in tRNA + selenophosphate + (2E)-geranyl diphosphate + H2O + H(+) = 5-methylaminomethyl-2-selenouridine(34) in tRNA + (2E)-thiogeraniol + phosphate + diphosphate. It catalyses the reaction 5-methylaminomethyl-2-thiouridine(34) in tRNA + (2E)-geranyl diphosphate = 5-methylaminomethyl-S-(2E)-geranyl-thiouridine(34) in tRNA + diphosphate. The enzyme catalyses 5-methylaminomethyl-S-(2E)-geranyl-thiouridine(34) in tRNA + selenophosphate + H(+) = 5-methylaminomethyl-2-(Se-phospho)selenouridine(34) in tRNA + (2E)-thiogeraniol. It carries out the reaction 5-methylaminomethyl-2-(Se-phospho)selenouridine(34) in tRNA + H2O = 5-methylaminomethyl-2-selenouridine(34) in tRNA + phosphate. Its function is as follows. Involved in the post-transcriptional modification of the uridine at the wobble position (U34) of tRNA(Lys), tRNA(Glu) and tRNA(Gln). Catalyzes the conversion of 2-thiouridine (S2U-RNA) to 2-selenouridine (Se2U-RNA). Acts in a two-step process involving geranylation of 2-thiouridine (S2U) to S-geranyl-2-thiouridine (geS2U) and subsequent selenation of the latter derivative to 2-selenouridine (Se2U) in the tRNA chain. The protein is tRNA 2-selenouridine synthase of Pseudomonas putida (strain ATCC 47054 / DSM 6125 / CFBP 8728 / NCIMB 11950 / KT2440).